The chain runs to 655 residues: ATP-dependent zinc metalloprotease FtsH (655 aa).

Topologically, residues 1 to 17 are cytoplasmic; the sequence is MPIETEPNRTRKNFEPK. A helical membrane pass occupies residues 18–38; it reads RFGGSLFILFTLLLFLNLFVL. At 39 to 124 the chain is on the lumenal side; sequence RGPRFPITAY…APPPSSLSWL (86 aa). Residues 125–145 traverse the membrane as a helical segment; the sequence is PTLLGWVVPPLIFFGIWSWLI. The Cytoplasmic segment spans residues 146–655; that stretch reads NRNQGAGPAA…LNSHQLIGIN (510 aa). 216–223 serves as a coordination point for ATP; the sequence is GPPGTGKT. Zn(2+) is bound at residue H440. E441 is an active-site residue. Zn(2+) is bound by residues H444 and D517.

This sequence in the central section; belongs to the AAA ATPase family. The protein in the C-terminal section; belongs to the peptidase M41 family. Homohexamer. The cofactor is Zn(2+).

Its subcellular location is the cellular thylakoid membrane. Its function is as follows. Acts as a processive, ATP-dependent zinc metallopeptidase for both cytoplasmic and membrane proteins. Plays a role in the quality control of integral membrane proteins. The chain is ATP-dependent zinc metalloprotease FtsH from Acaryochloris marina (strain MBIC 11017).